We begin with the raw amino-acid sequence, 127 residues long: Large ribosomal subunit protein bL12 (127 aa).

It belongs to the bacterial ribosomal protein bL12 family. Homodimer. Part of the ribosomal stalk of the 50S ribosomal subunit. Forms a multimeric L10(L12)X complex, where L10 forms an elongated spine to which 2 to 4 L12 dimers bind in a sequential fashion. Binds GTP-bound translation factors.

Its function is as follows. Forms part of the ribosomal stalk which helps the ribosome interact with GTP-bound translation factors. Is thus essential for accurate translation. This chain is Large ribosomal subunit protein bL12, found in Nitratiruptor sp. (strain SB155-2).